We begin with the raw amino-acid sequence, 390 residues long: Tuftelin (390 aa).

2 coiled-coil regions span residues 88-126 and 162-351; these read DKMI…KLDR and DTCI…IEKQ. Residues 358–390 form a disordered region; it reads STQARAKTENPGSIRISKPPSPKPMPVIRVVET.

The protein belongs to the tuftelin family. As to quaternary structure, interacts with TFIP11. In terms of tissue distribution, expressed in the epidermis (at protein level). Present in the extracellular enamel and is mainly associated with the crystal component.

Its subcellular location is the secreted. Functionally, involved in the structural organization of the epidermis. Involved in the mineralization and structural organization of enamel. This is Tuftelin (TUFT1) from Homo sapiens (Human).